A 216-amino-acid chain; its full sequence is Large ribosomal subunit protein uL3 (216 aa).

The disordered stretch occupies residues 137–158; it reads GASHGAHKNHRKPGSIGGASTP.

Belongs to the universal ribosomal protein uL3 family. As to quaternary structure, part of the 50S ribosomal subunit. Forms a cluster with proteins L14 and L19.

In terms of biological role, one of the primary rRNA binding proteins, it binds directly near the 3'-end of the 23S rRNA, where it nucleates assembly of the 50S subunit. The chain is Large ribosomal subunit protein uL3 from Arthrobacter sp. (strain FB24).